Here is a 471-residue protein sequence, read N- to C-terminus: Mannose-1-phosphate guanylyltransferase (471 aa).

The protein belongs to the mannose-6-phosphate isomerase type 2 family.

It catalyses the reaction alpha-D-mannose 1-phosphate + GTP + H(+) = GDP-alpha-D-mannose + diphosphate. Its pathway is nucleotide-sugar biosynthesis; GDP-alpha-D-mannose biosynthesis; GDP-alpha-D-mannose from alpha-D-mannose 1-phosphate (GTP route): step 1/1. It functions in the pathway bacterial outer membrane biogenesis; LPS O-antigen biosynthesis. In terms of biological role, involved in GDP-mannose biosynthesis which serves as the activated sugar nucleotide precursor for mannose residues in cell surface polysaccharides. This enzyme participates in synthesis of the LPS O9 antigen. This chain is Mannose-1-phosphate guanylyltransferase (manC), found in Escherichia coli.